Here is a 104-residue protein sequence, read N- to C-terminus: Glutaredoxin-C15 (104 aa).

The Glutaredoxin domain maps to 1–103; sequence MERVAKLSTE…PMLKAAGAIW (103 aa). The cysteines at positions 21 and 24 are disulfide-linked.

It belongs to the glutaredoxin family. CC-type subfamily.

It is found in the cytoplasm. Has a glutathione-disulfide oxidoreductase activity in the presence of NADPH and glutathione reductase. Reduces low molecular weight disulfides and proteins. This Oryza sativa subsp. japonica (Rice) protein is Glutaredoxin-C15 (GRXC15).